The sequence spans 407 residues: tRNA (uracil(54)-C(5))-methyltransferase (407 aa).

Cysteine 61, cysteine 67, cysteine 70, and cysteine 137 together coordinate [4Fe-4S] cluster. Residues glutamine 253, tyrosine 279, threonine 284, 300 to 301 (DS), aspartate 327, and aspartate 341 each bind S-adenosyl-L-methionine. The active-site Nucleophile is the cysteine 368. Glutamate 400 functions as the Proton acceptor in the catalytic mechanism.

It belongs to the class I-like SAM-binding methyltransferase superfamily. RNA M5U methyltransferase family.

The enzyme catalyses uridine(54) in tRNA + S-adenosyl-L-methionine = 5-methyluridine(54) in tRNA + S-adenosyl-L-homocysteine + H(+). Catalyzes the formation of 5-methyl-uridine at position 54 (m5U54) in tRNA. This Pyrococcus horikoshii (strain ATCC 700860 / DSM 12428 / JCM 9974 / NBRC 100139 / OT-3) protein is tRNA (uracil(54)-C(5))-methyltransferase.